A 36-amino-acid chain; its full sequence is Amanexitide proprotein 2 (36 aa).

Residues 1-10 constitute a propeptide that is removed on maturation; sequence MSDINATRLP. The segment at residues 11-19 is a cross-link (cyclopeptide (Val-Pro)); that stretch reads VFSLPVFFP. Positions 20-36 are excised as a propeptide; sequence FVSDDIQAVLTRGESLC.

This sequence belongs to the MSDIN fungal toxin family. Post-translationally, processed by the macrocyclase-peptidase enzyme POPB to yield a toxic cyclic nonapeptide. POPB first removes 10 residues from the N-terminus. Conformational trapping of the remaining peptide forces the enzyme to release this intermediate rather than proceed to macrocyclization. The enzyme rebinds the remaining peptide in a different conformation and catalyzes macrocyclization of the N-terminal 9 residues. As to expression, expressed in basidiocarps.

Cyclic nonapeptide that belongs to the MSDIN-like toxin family responsible for a large number of food poisoning cases and deaths. In Amanita exitialis (Guangzhou destroying angel), this protein is Amanexitide proprotein 2.